We begin with the raw amino-acid sequence, 29 residues long: Myosin heavy chain, muscle (29 aa).

Over residues 1–16 (SKYESEGVARSEELQE) the composition is skewed to basic and acidic residues. A disordered region spans residues 1–29 (SKYESEGVARSEELQEVHQAFADAGRKPI).

Muscle myosin is a hexameric protein that consists of 2 heavy chain subunits (MHC), 2 alkali light chain subunits (MLC) and 2 regulatory light chain subunits (MLC-2).

The protein resides in the cytoplasm. The protein localises to the myofibril. In terms of biological role, muscle contraction. This Bombyx mori (Silk moth) protein is Myosin heavy chain, muscle.